The following is a 188-amino-acid chain: Large ribosomal subunit protein eL18z (188 aa).

It belongs to the eukaryotic ribosomal protein eL18 family.

This Arabidopsis thaliana (Mouse-ear cress) protein is Large ribosomal subunit protein eL18z (RPL18A).